The sequence spans 192 residues: MDNQFIFKYSWETLPKKWVKKIEKSEHGNRFDTNTDYLFQLLCFLKLHTYTRFQVLIDICGVDYPSRKRRFEVVYNLLSTRYNSRIRLQTSADEVTRISSVVRLFPSAGWWEREVWDMFGVSFINHPDLRRILTDYGFEGHPLRKDFPLSGYVEVRYDDPEKRVVSEPIEMTQEFRYFDFASPWEQRNGNEG.

Belongs to the complex I 30 kDa subunit family. As to quaternary structure, complex I is composed of about 45 different subunits. This is a component of the iron-sulfur (IP) fragment of the enzyme.

It localises to the mitochondrion inner membrane. It catalyses the reaction a ubiquinone + NADH + 5 H(+)(in) = a ubiquinol + NAD(+) + 4 H(+)(out). Core subunit of the mitochondrial membrane respiratory chain NADH dehydrogenase (Complex I) that is believed to belong to the minimal assembly required for catalysis. Complex I functions in the transfer of electrons from NADH to the respiratory chain. The immediate electron acceptor for the enzyme is believed to be ubiquinone. The polypeptide is NADH dehydrogenase [ubiquinone] iron-sulfur protein 3 (NAD9) (Patellifolia webbiana (Patellaria webbiana)).